The primary structure comprises 147 residues: Ribosomal RNA large subunit methyltransferase H (147 aa).

Residues Leu-64, Gly-96, and Phe-115–Phe-120 contribute to the S-adenosyl-L-methionine site.

Belongs to the RNA methyltransferase RlmH family. Homodimer.

Its subcellular location is the cytoplasm. The catalysed reaction is pseudouridine(1915) in 23S rRNA + S-adenosyl-L-methionine = N(3)-methylpseudouridine(1915) in 23S rRNA + S-adenosyl-L-homocysteine + H(+). Functionally, specifically methylates the pseudouridine at position 1915 (m3Psi1915) in 23S rRNA. In Acholeplasma laidlawii (strain PG-8A), this protein is Ribosomal RNA large subunit methyltransferase H.